Here is a 305-residue protein sequence, read N- to C-terminus: Probable lipid kinase YegS-like (305 aa).

Positions 2–134 constitute a DAGKc domain; it reads HPPAPALLII…DLAKVNDQRY (133 aa). ATP is bound by residues T40, 66–72, and T95; that span reads GDGTINE. Mg(2+)-binding residues include L215, D218, and L220. E271 functions as the Proton acceptor in the catalytic mechanism.

Belongs to the diacylglycerol/lipid kinase family. YegS lipid kinase subfamily. Mg(2+) is required as a cofactor. Requires Ca(2+) as cofactor.

It is found in the cytoplasm. Its function is as follows. Probably phosphorylates lipids; the in vivo substrate is unknown. This Serratia proteamaculans (strain 568) protein is Probable lipid kinase YegS-like.